Here is a 248-residue protein sequence, read N- to C-terminus: Probable S-methyl-5'-thioinosine phosphorylase (248 aa).

Residues Thr-12 and 54–55 (RH) each bind phosphate. Met-187 is a substrate binding site. Residue Thr-188 participates in phosphate binding. A substrate-binding site is contributed by 211 to 213 (NWA).

It belongs to the PNP/MTAP phosphorylase family. MTAP subfamily. Homotrimer.

The catalysed reaction is S-methyl-5'-thioinosine + phosphate = 5-(methylsulfanyl)-alpha-D-ribose 1-phosphate + hypoxanthine. It participates in purine metabolism; purine nucleoside salvage. In terms of biological role, catalyzes the reversible phosphorylation of S-methyl-5'-thioinosine (MTI) to hypoxanthine and 5-methylthioribose-1-phosphate. Involved in the breakdown of S-methyl-5'-thioadenosine (MTA), a major by-product of polyamine biosynthesis. Catabolism of (MTA) occurs via deamination to MTI and phosphorolysis to hypoxanthine. This chain is Probable S-methyl-5'-thioinosine phosphorylase, found in Xylella fastidiosa (strain Temecula1 / ATCC 700964).